A 595-amino-acid chain; its full sequence is (E)-beta-ocimene synthase, chloroplastic (595 aa).

A chloroplast-targeting transit peptide spans 1–32 (MSTISINLMSIIRNPLHSKSKRALINKHPSSS). The Mn(2+) site is built by aspartate 350 and aspartate 354. Residues 350–354 (DDVYD) carry the DDXXD motif motif. Homodimerization stretches follow at residues 356-362 (YGTLDEL) and 428-465 (EEEW…LSIP). 2 residues coordinate Mn(2+): asparagine 493 and glutamate 501.

Belongs to the terpene synthase family. Homodimer. The cofactor is Mn(2+). It depends on Mg(2+) as a cofactor. As to expression, expressed in peltate glandular trichomes. Present in flowers, leaves and stems.

The protein localises to the plastid. It is found in the chloroplast. It carries out the reaction (2E)-geranyl diphosphate = (E)-beta-ocimene + diphosphate. It participates in secondary metabolite biosynthesis; terpenoid biosynthesis. In terms of biological role, involved in the biosynthesis of monoterpenes natural products. Monoterpene synthase that catalyzes mainly the formation of (E)-beta-ocimene and minor amounts of other monoterpenes (e.g. myrcene, (Z)-beta-ocimene, alpha- and gamma-terpinene) from geranyl diphosphate (GPP). This Origanum vulgare (Wild marjoram) protein is (E)-beta-ocimene synthase, chloroplastic.